Reading from the N-terminus, the 1442-residue chain is ABC transporter G family member 11 (1442 aa).

The 249-residue stretch at leucine 125–proline 373 folds into the ABC transporter 1 domain. The ABC transmembrane type-2 1 domain occupies leucine 478 to aspartate 718. A run of 6 helical transmembrane segments spans residues phenylalanine 482–phenylalanine 502, alanine 518–phenylalanine 538, isoleucine 567–leucine 587, glycine 592–phenylalanine 612, asparagine 627–proline 647, and isoleucine 737–isoleucine 757. The ABC transporter 2 domain maps to phenylalanine 808 to valine 1052. Glycine 844 to threonine 851 provides a ligand contact to ATP. The ABC transmembrane type-2 2 domain maps to tyrosine 1144–alanine 1369. Transmembrane regions (helical) follow at residues tyrosine 1147–leucine 1167, isoleucine 1181–isoleucine 1201, phenylalanine 1220–phenylalanine 1240, phenylalanine 1259–valine 1279, methionine 1286–valine 1306, and valine 1416–leucine 1436.

This sequence belongs to the ABC transporter superfamily. ABCG family. PDR (TC 3.A.1.205) subfamily.

Its subcellular location is the membrane. The protein is ABC transporter G family member 11 (abcG11) of Dictyostelium discoideum (Social amoeba).